A 495-amino-acid polypeptide reads, in one-letter code: Putative aldehyde dehydrogenase DhaS (495 aa).

244–249 (GSTEIG) is a binding site for NAD(+). Catalysis depends on residues E266 and C300.

The protein belongs to the aldehyde dehydrogenase family.

It catalyses the reaction an aldehyde + NAD(+) + H2O = a carboxylate + NADH + 2 H(+). This chain is Putative aldehyde dehydrogenase DhaS (dhaS), found in Bacillus subtilis (strain 168).